Here is a 166-residue protein sequence, read N- to C-terminus: Ribosome-binding factor A (166 aa).

Positions 122-166 (HVADETDVEDSTDHEDDVTNSEDETKHVDIDTDSEEGTNTDGKAQ) are disordered. Acidic residues predominate over residues 126–143 (ETDVEDSTDHEDDVTNSE).

Belongs to the RbfA family. Monomer. Binds 30S ribosomal subunits, but not 50S ribosomal subunits or 70S ribosomes.

Its subcellular location is the cytoplasm. Its function is as follows. One of several proteins that assist in the late maturation steps of the functional core of the 30S ribosomal subunit. Associates with free 30S ribosomal subunits (but not with 30S subunits that are part of 70S ribosomes or polysomes). Required for efficient processing of 16S rRNA. May interact with the 5'-terminal helix region of 16S rRNA. The protein is Ribosome-binding factor A of Pseudoalteromonas translucida (strain TAC 125).